The chain runs to 221 residues: MWRTNQVSSRQNMAGFTLIEVLVAIAIFASLSVGAYQVLNQVQRSNEISAERTARLAELQRAMVIMDADFRQMALRQFRTDGEAPSEQILQWKESLLDSDQHGLLFVRLGWHNPQQQFPRGEVAKVGYRLFENRLERVWWRYPDTPAGQQGLISPLLTGVEDWAVQFYLQGEWSKEWVPTNALPEAVKVTLRLKDYGEIERIYLTGGGSLNMTQESVENAG.

Positions 1–15 (MWRTNQVSSRQNMAG) are cleaved as a propeptide — leader sequence. Position 16 is an N-methylphenylalanine (Phe-16). A helical membrane pass occupies residues 16-36 (FTLIEVLVAIAIFASLSVGAY).

This sequence belongs to the GSP J family. Type II secretion is composed of four main components: the outer membrane complex, the inner membrane complex, the cytoplasmic secretion ATPase and the periplasm-spanning pseudopilus. Interacts with core component epsG. In terms of processing, cleaved by prepilin peptidase. Post-translationally, methylated by prepilin peptidase at the amino group of the N-terminal phenylalanine once the leader sequence is cleaved by prepilin peptidase.

It localises to the cell inner membrane. Its function is as follows. Component of the type II secretion system required for the energy-dependent secretion of extracellular factors such as proteases and toxins from the periplasm. Part of the pseudopilus tip complex that is critical for the recognition and binding of secretion substrates. The protein is Type II secretion system protein J (epsJ) of Vibrio cholerae serotype O1 (strain ATCC 39315 / El Tor Inaba N16961).